Consider the following 279-residue polypeptide: ATP synthase subunit delta (279 aa).

The protein belongs to the ATPase delta chain family. As to quaternary structure, F-type ATPases have 2 components, F(1) - the catalytic core - and F(0) - the membrane proton channel. F(1) has five subunits: alpha(3), beta(3), gamma(1), delta(1), epsilon(1). F(0) has three main subunits: a(1), b(2) and c(10-14). The alpha and beta chains form an alternating ring which encloses part of the gamma chain. F(1) is attached to F(0) by a central stalk formed by the gamma and epsilon chains, while a peripheral stalk is formed by the delta and b chains.

It is found in the cell membrane. In terms of biological role, f(1)F(0) ATP synthase produces ATP from ADP in the presence of a proton or sodium gradient. F-type ATPases consist of two structural domains, F(1) containing the extramembraneous catalytic core and F(0) containing the membrane proton channel, linked together by a central stalk and a peripheral stalk. During catalysis, ATP synthesis in the catalytic domain of F(1) is coupled via a rotary mechanism of the central stalk subunits to proton translocation. Functionally, this protein is part of the stalk that links CF(0) to CF(1). It either transmits conformational changes from CF(0) to CF(1) or is implicated in proton conduction. This Parafrankia sp. (strain EAN1pec) protein is ATP synthase subunit delta.